The primary structure comprises 330 residues: L-lactate dehydrogenase (330 aa).

NAD(+) is bound by residues Val-31, Asp-52, Lys-57, and 96–97 (GA). Substrate is bound by residues Gln-99, Arg-105, and 137–140 (NPVD). Residues 135–137 (VSN) and Ser-160 each bind NAD(+). Substrate is bound at residue 165–168 (DTAR). Beta-D-fructose 1,6-bisphosphate is bound by residues Arg-170 and His-185. Residue His-192 is the Proton acceptor of the active site. Tyr-238 bears the Phosphotyrosine mark. A substrate-binding site is contributed by Thr-247.

This sequence belongs to the LDH/MDH superfamily. LDH family. As to quaternary structure, homotetramer.

Its subcellular location is the cytoplasm. It catalyses the reaction (S)-lactate + NAD(+) = pyruvate + NADH + H(+). Its pathway is fermentation; pyruvate fermentation to lactate; (S)-lactate from pyruvate: step 1/1. With respect to regulation, allosterically activated by fructose 1,6-bisphosphate (FBP). In terms of biological role, catalyzes the conversion of lactate to pyruvate. In Gloeobacter violaceus (strain ATCC 29082 / PCC 7421), this protein is L-lactate dehydrogenase.